Here is a 426-residue protein sequence, read N- to C-terminus: Serine--tRNA ligase (426 aa).

233-235 (TAE) contacts L-serine. 264–266 (RSE) contacts ATP. L-serine is bound at residue Glu-287. 351–354 (EISS) is an ATP binding site. Ser-387 provides a ligand contact to L-serine.

This sequence belongs to the class-II aminoacyl-tRNA synthetase family. Type-1 seryl-tRNA synthetase subfamily. As to quaternary structure, homodimer. The tRNA molecule binds across the dimer.

It localises to the cytoplasm. It catalyses the reaction tRNA(Ser) + L-serine + ATP = L-seryl-tRNA(Ser) + AMP + diphosphate + H(+). The catalysed reaction is tRNA(Sec) + L-serine + ATP = L-seryl-tRNA(Sec) + AMP + diphosphate + H(+). It functions in the pathway aminoacyl-tRNA biosynthesis; selenocysteinyl-tRNA(Sec) biosynthesis; L-seryl-tRNA(Sec) from L-serine and tRNA(Sec): step 1/1. Functionally, catalyzes the attachment of serine to tRNA(Ser). Is also able to aminoacylate tRNA(Sec) with serine, to form the misacylated tRNA L-seryl-tRNA(Sec), which will be further converted into selenocysteinyl-tRNA(Sec). The protein is Serine--tRNA ligase of Pseudomonas putida (strain ATCC 47054 / DSM 6125 / CFBP 8728 / NCIMB 11950 / KT2440).